The following is a 341-amino-acid chain: tRNA N6-adenosine threonylcarbamoyltransferase (341 aa).

H115 and H119 together coordinate Fe cation. Substrate-binding positions include 138–142 (VVSGG), D171, G184, D188, and N279. Position 307 (D307) interacts with Fe cation.

It belongs to the KAE1 / TsaD family. The cofactor is Fe(2+).

The protein resides in the cytoplasm. The enzyme catalyses L-threonylcarbamoyladenylate + adenosine(37) in tRNA = N(6)-L-threonylcarbamoyladenosine(37) in tRNA + AMP + H(+). Required for the formation of a threonylcarbamoyl group on adenosine at position 37 (t(6)A37) in tRNAs that read codons beginning with adenine. Is involved in the transfer of the threonylcarbamoyl moiety of threonylcarbamoyl-AMP (TC-AMP) to the N6 group of A37, together with TsaE and TsaB. TsaD likely plays a direct catalytic role in this reaction. The sequence is that of tRNA N6-adenosine threonylcarbamoyltransferase from Clostridium novyi (strain NT).